We begin with the raw amino-acid sequence, 145 residues long: Bacilliredoxin SERP1006 (145 aa).

It belongs to the bacilliredoxin family.

The chain is Bacilliredoxin SERP1006 from Staphylococcus epidermidis (strain ATCC 35984 / DSM 28319 / BCRC 17069 / CCUG 31568 / BM 3577 / RP62A).